The following is a 519-amino-acid chain: 2-isopropylmalate synthase (519 aa).

The Pyruvate carboxyltransferase domain maps to 5-267 (VIIFDTTLRD…QTRINHKEIY (263 aa)). Positions 14, 202, 204, and 238 each coordinate Mn(2+). The segment at 392–519 (VMNYFNTQSG…RKHHTTQEAV (128 aa)) is regulatory domain.

This sequence belongs to the alpha-IPM synthase/homocitrate synthase family. LeuA type 1 subfamily. Homodimer. Requires Mn(2+) as cofactor.

It is found in the cytoplasm. It catalyses the reaction 3-methyl-2-oxobutanoate + acetyl-CoA + H2O = (2S)-2-isopropylmalate + CoA + H(+). It functions in the pathway amino-acid biosynthesis; L-leucine biosynthesis; L-leucine from 3-methyl-2-oxobutanoate: step 1/4. Its function is as follows. Catalyzes the condensation of the acetyl group of acetyl-CoA with 3-methyl-2-oxobutanoate (2-ketoisovalerate) to form 3-carboxy-3-hydroxy-4-methylpentanoate (2-isopropylmalate). The polypeptide is 2-isopropylmalate synthase (Proteus mirabilis (strain HI4320)).